Reading from the N-terminus, the 238-residue chain is tRNA (guanine-N(7)-)-methyltransferase (238 aa).

S-adenosyl-L-methionine is bound by residues Glu-68, Glu-93, Asp-120, and Asp-143. Asp-143 is a catalytic residue. Substrate contacts are provided by residues Lys-147, Asp-179, and 216 to 219; that span reads TKFE.

The protein belongs to the class I-like SAM-binding methyltransferase superfamily. TrmB family.

The enzyme catalyses guanosine(46) in tRNA + S-adenosyl-L-methionine = N(7)-methylguanosine(46) in tRNA + S-adenosyl-L-homocysteine. It participates in tRNA modification; N(7)-methylguanine-tRNA biosynthesis. Functionally, catalyzes the formation of N(7)-methylguanine at position 46 (m7G46) in tRNA. The protein is tRNA (guanine-N(7)-)-methyltransferase of Shewanella baltica (strain OS195).